Here is a 234-residue protein sequence, read N- to C-terminus: Thiamine import ATP-binding protein ThiQ (234 aa).

The ABC transporter domain occupies Leu2–Leu230. Gly32–Ser39 is a binding site for ATP.

Belongs to the ABC transporter superfamily. Thiamine importer (TC 3.A.1.19.1) family. The complex is composed of two ATP-binding proteins (ThiQ), two transmembrane proteins (ThiP) and a solute-binding protein (ThiB).

The protein resides in the cell inner membrane. It catalyses the reaction thiamine(out) + ATP + H2O = thiamine(in) + ADP + phosphate + H(+). Part of the ABC transporter complex ThiBPQ involved in thiamine import. Responsible for energy coupling to the transport system. The polypeptide is Thiamine import ATP-binding protein ThiQ (Aliivibrio fischeri (strain ATCC 700601 / ES114) (Vibrio fischeri)).